The chain runs to 260 residues: 14-3-3-like protein (260 aa).

Belongs to the 14-3-3 family.

This chain is 14-3-3-like protein, found in Pisum sativum (Garden pea).